Here is a 274-residue protein sequence, read N- to C-terminus: ATP synthase subunit a (274 aa).

Transmembrane regions (helical) follow at residues 43 to 63, 103 to 123, 149 to 169, 223 to 243, and 245 to 265; these read TLNI…LLVF, VIAP…MMDL, DVSI…FYSI, LIFI…LSVP, and AIFH…LTIV.

Belongs to the ATPase A chain family. In terms of assembly, F-type ATPases have 2 components, CF(1) - the catalytic core - and CF(0) - the membrane proton channel. CF(1) has five subunits: alpha(3), beta(3), gamma(1), delta(1), epsilon(1). CF(0) has three main subunits: a(1), b(2) and c(9-12). The alpha and beta chains form an alternating ring which encloses part of the gamma chain. CF(1) is attached to CF(0) by a central stalk formed by the gamma and epsilon chains, while a peripheral stalk is formed by the delta and b chains.

It is found in the cell inner membrane. Functionally, key component of the proton channel; it plays a direct role in the translocation of protons across the membrane. This is ATP synthase subunit a from Yersinia pestis bv. Antiqua (strain Antiqua).